Consider the following 857-residue polypeptide: Autoinducer 2 sensor kinase/phosphatase LuxQ (857 aa).

A run of 2 helical transmembrane segments spans residues 14 to 34 (IASFITHAVVVVMGVLIVSVL) and 283 to 303 (FWMAFALISMIGVSIASRWWL). The 221-residue stretch at 486–706 (KMSHELRTPL…RFEIQLPIEL (221 aa)) folds into the Histidine kinase domain. His489 carries the post-translational modification Phosphohistidine; by autocatalysis. The Response regulatory domain maps to 731 to 846 (RVLLVEDNHT…TLHKALEHFK (116 aa)). Asp780 is modified (4-aspartylphosphate).

In terms of assembly, binds the complex formed by AI-2 and LuxP.

The protein localises to the cell inner membrane. The enzyme catalyses ATP + protein L-histidine = ADP + protein N-phospho-L-histidine.. Its function is as follows. At low cell density, in absence of AI-2 (autoinducer 2), LuxQ has a kinase activity and autophosphorylates on a histidine residue. The phosphoryl group is then transferred to an aspartate residue in the response regulator domain. The phosphoryl group is transferred to LuxU, and ultimately to LuxO. At high cell density, in the presence of AI-2, the kinase activity is inactivated, and the response regulator domain has a phosphatase activity. In Vibrio cholerae serotype O1 (strain ATCC 39315 / El Tor Inaba N16961), this protein is Autoinducer 2 sensor kinase/phosphatase LuxQ (luxQ).